The chain runs to 329 residues: Transcription factor RF2b (329 aa).

Disordered regions lie at residues methionine 1–valine 24 and serine 62–glycine 97. A bZIP domain is found at aspartate 132–leucine 195. A basic motif region spans residues lysine 134–arginine 155. The interval leucine 160–leucine 174 is leucine-zipper. The interval arginine 260 to glycine 303 is disordered.

This sequence belongs to the bZIP family. In terms of assembly, binds DNA as a homodimer or as a heterodimer with RF2a. The heterodimer binds stronger to DNA than the homodimer. Expressed at high levels in roots, low level in leaf sheath, but not in leaf blade. Predominantly expressed in vascular tissues.

It is found in the nucleus. Transcription factor probably involved in vascular development and shoot tissue organization. Binds to the DNA sequence 5'-CCGAGTGTGCCCCTGG-3' present in the promoter region Box II of the phloem-specific rice tungro bacilliform virus (RTBV) promoter. May regulate tissue-specific expression of the RTBV promoter and virus replication. The chain is Transcription factor RF2b (RF2b) from Oryza sativa subsp. japonica (Rice).